Consider the following 476-residue polypeptide: FAD-dependent monooxygenase dpasE (476 aa).

The first 21 residues, 1–21 (MSQPAFKIIIVGCSVTGLTLA), serve as a signal peptide directing secretion. Glu35, Ala49, and Arg109 together coordinate FAD. Residues Asn190 and Asn219 are each glycosylated (N-linked (GlcNAc...) asparagine). FAD contacts are provided by Asp308 and Ala321. A helical membrane pass occupies residues 441–461 (GAGFWITAFLSLSLLAVAATM).

This sequence belongs to the paxM FAD-dependent monooxygenase family. FAD is required as a cofactor.

The protein resides in the membrane. It participates in secondary metabolite biosynthesis; terpenoid biosynthesis. Its function is as follows. FAD-dependent monooxygenase; part of the gene cluster that mediates the biosynthesis of the diterpenoid pyrones subglutinols A and B. The first step of the pathway is the synthesis of the alpha-pyrone moiety by the polyketide synthase dpasA via condensation of one acetyl-CoA starter unit with 3 malonyl-CoA units and 2 methylations. The alpha-pyrone is then combined with geranylgeranyl pyrophosphate (GGPP) formed by the GGPP synthase dpasD through the action of the prenyltransferase dpasC to yield a linear alpha-pyrone diterpenoid. Subsequent steps in the diterpenoid pyrone biosynthetic pathway involve the decalin core formation, which is initiated by the epoxidation of the C10-C11 olefin by the FAD-dependent oxidoreductase dpasE, and is followed by a cyclization cascade catalyzed by the terpene cyclase dpasB. The FAD-linked oxidoreductase dpasF is then involved in tetrahydrofuran (THF) ring formation at the C5 unit to complete the formation of subglutinols A and B. DpasF possesses also an additional catalytic ability of multi-step oxidations to generate a new DDP analog with an enone system at the C5 named FDDP A. The chain is FAD-dependent monooxygenase dpasE from Apiospora sacchari (Arthrinium sacchari).